The sequence spans 941 residues: MSGMVDLKEFLAELGKTQKELKNVIEQAKDIGLELRTNSKMTPEEAEKLYKYIVDGIKEQIQSNRPIKKDKEGAATPKASNKKTSKTPKKEEAKSQLKPKNTKKKKKEAPTPILKKKGIEIVDTFENKTPPVENAPKVVTPSQSQIEKAKQKLQEIQKSREALNKLTQSNTNNANNANSAKKEISEVAKQEREQEHLDNKRRENIKRYTGFRVIKRNDDENETQNSVTENKKPTQSAVAIFEDIKKEWQEKDKETKKAKKSNKPKAIPAAKNNKSHKIDFSDARDFKGNNDIYDDETDEILLFDLHEQDNLNEEEEKEIRQNINDRARIQRKNPWMNEGGIKRQSKKKRVFRNDNSQKVVQSVISIPEEVCVYEFAQKANLNLADVIKTLFNLGLMVTKNDFLDKDSIEILAEEFHLEISVQNTLEEFEVEEVLEGVKKERPPVVTIMGHVDHGKTSLLDKIRDKRVAHTEAGGITQHIGAYMVEKNGKWVSFIDTPGHEAFSQMRNRGAQVTDIAVIVIAADDGVKQQTVEALEHAKVANVPVIFAMNKMDKPNVNLDKLKAECAELGYNPVDWGGEYEFIPISAKTGDGIDNLLETILIQADIMELKAIEEGRARAVVLEGSVEKGRGAVATVIVQSGTLSVGDSFFAETAFGKVRTMTDDQGKSIQNLKPSMVALITGLSEVPPAGSVLIGVENDSIARLQAQKRATYLRQKALSKSTKVSFDELSEMVANKELKNIPVVIKADTQGSLEAIKNSLLELNNEEVAIQVIHSGVGGITENDLSLVASSEHAVILGFNIRPTGNVKNKAKEYNVSIKTYTVIYALIEEMRSLLLGLMSPIIEEEHTGQAEVRETFNIPKVGTIAGCVVSDGVITRGIKVRLIRDGVVIHTGEILSLKRFKDDAKEVSKGYECGIMLENYNEIKVGDVFETYKEIHKKRTL.

Disordered regions lie at residues 61–204 and 249–274; these read IQSN…RREN and QEKD…KNNK. Positions 147 to 163 are enriched in basic and acidic residues; that stretch reads EKAKQKLQEIQKSREAL. A compositionally biased stretch (low complexity) spans 164-179; the sequence is NKLTQSNTNNANNANS. The segment covering 180 to 204 has biased composition (basic and acidic residues); the sequence is AKKEISEVAKQEREQEHLDNKRREN. The tr-type G domain occupies 440-609; the sequence is ERPPVVTIMG…LIQADIMELK (170 aa). The segment at 449 to 456 is G1; the sequence is GHVDHGKT. 449-456 serves as a coordination point for GTP; sequence GHVDHGKT. Residues 474–478 are G2; sequence GITQH. A G3 region spans residues 495–498; sequence DTPG. GTP contacts are provided by residues 495 to 499 and 549 to 552; these read DTPGH and NKMD. The interval 549–552 is G4; sequence NKMD. The G5 stretch occupies residues 585–587; sequence SAK.

The protein belongs to the TRAFAC class translation factor GTPase superfamily. Classic translation factor GTPase family. IF-2 subfamily.

Its subcellular location is the cytoplasm. Functionally, one of the essential components for the initiation of protein synthesis. Protects formylmethionyl-tRNA from spontaneous hydrolysis and promotes its binding to the 30S ribosomal subunits. Also involved in the hydrolysis of GTP during the formation of the 70S ribosomal complex. The protein is Translation initiation factor IF-2 of Helicobacter acinonychis (strain Sheeba).